The chain runs to 467 residues: MSSILPFTPPVVKRLLGWKKSAGGSGGAGGGEQNGQEEKWCEKAVKSLVKKLKKTGRLDELEKAITTQNCNTKCVTIPSTCSEIWGLSTPNTIDQWDTTGLYSFSEQTRSLDGRLQVSHRKGLPHVIYCRLWRWPDLHSHHELKAIENCEYAFNLKKDEVCVNPYHYQRVETPVLPPVLVPRHTEILTELPPLDDYTHSIPENTNFPAGIEPQSNYIPETPPPGYISEDGETSDQQLNQSMDTGSPAELSPTTLSPVNHSLDLQPVTYSEPAFWCSIAYYELNQRVGETFHASQPSLTVDGFTDPSNSERFCLGLLSNVNRNATVEMTRRHIGRGVRLYYIGGEVFAECLSDSAIFVQSPNCNQRYGWHPATVCKIPPGCNLKIFNNQGFAALLAQSVNQGFEAVYQLTRMCTIRMSFVKGWGAEYRRQTVTSTPCWIELHLNGPLQWLDKVLTQMGSPSVRCSSMS.

An N-acetylserine modification is found at Ser2. Thr8 is subject to Phosphothreonine. The region spanning 10-176 is the MH1 domain; the sequence is PVVKRLLGWK…YQRVETPVLP (167 aa). Lys19 is subject to N6-acetyllysine. Zn(2+)-binding residues include Cys74, Cys149, Cys161, and His166. Polar residues predominate over residues 207-217; the sequence is PAGIEPQSNYI. Residues 207–251 form a disordered region; that stretch reads PAGIEPQSNYIPETPPPGYISEDGETSDQQLNQSMDTGSPAELSP. Thr220 carries the phosphothreonine modification. The short motif at 221 to 225 is the PY-motif element; the sequence is PPPGY. The segment covering 233–243 has biased composition (polar residues); sequence SDQQLNQSMDT. Ser240 carries the post-translational modification Phosphoserine; by CAMK2. A phosphoserine mark is found at Ser245, Ser250, Ser255, Ser458, Ser460, and Ser464. Positions 274 to 467 constitute an MH2 domain; that stretch reads WCSIAYYELN…SPSVRCSSMS (194 aa). Residues Ser465 and Ser467 each carry the phosphoserine; by TGFBR1 modification.

It belongs to the dwarfin/SMAD family. Monomer; in the absence of TGF-beta. Heterodimer; in the presence of TGF-beta. Forms a heterodimer with co-SMAD, SMAD4, in the nucleus to form the transactivation complex SMAD2/SMAD4. Found in a complex with SMAD3 and TRIM33 upon addition of TGF-beta. Identified in a complex that contains at least ZNF451, SMAD2, SMAD3 and SMAD4. Interacts (via the MH2 domain) with ZFYVE9; may form trimers with the SMAD4 co-SMAD. Interacts with TAZ/WWRT1. Interacts with FOXH1. Interacts with SNW1. Interacts with CREB-binding protein (CBP) and EP300. Interacts with SNON. Interacts with ALK4/ACVR1B. Interacts with SKOR1. Interacts with SKOR2. Interacts with PRDM16. Interacts (via MH2 domain) with LEMD3. Interacts with RBPMS. Interacts with WWP1. Interacts (dephosphorylated form, via the MH1 and MH2 domains) with RANBP3 (via its C-terminal R domain); the interaction results in the export of dephosphorylated SMAD3 out of the nucleus and termination of the TGF-beta signaling. Interacts with PDPK1 (via PH domain). Interacts with DAB2; the interactions are enhanced upon TGF-beta stimulation. Interacts with USP15. Interacts with PPP5C. Interacts with LDLRAD4 (via the SMAD interaction motif). Interacts (via MH2 domain) with PMEPA1 (via the SMAD interaction motif). Interacts with ZFHX3. Interacts with ZNF451. Interacts with SMURF2 when phosphorylated on Ser-465/467. Interacts with PPM1A. Interacts with TGF-beta. Interacts with TGFBR1. Interacts with TGIF. Interacts with SMAD3 and TRIM33. Interacts with ZNF580. Interacts with NEDD4L in response to TGF-beta. Interacts with HGS. Interacts with AIP1. Interacts with WWP1. Interacts with PML. Interacts weakly with ZNF8. Interacts (when phosphorylated) with RNF111; RNF111 acts as an enhancer of the transcriptional responses by mediating ubiquitination and degradation of SMAD2 inhibitors. Interacts with YAP1 (when phosphorylated at 'Ser-55'). Interacts when phosphorylated with IPO7; the interaction facilitates translocation of SMAD2 to the nucleus. Interacts with MTMR4; negatively regulates TGF-beta signaling through SMAD2 dephosphorylation and retention in endosomes. In terms of processing, in response to TGF-beta, phosphorylated on the C-terminal SXS motif by TGF-beta and activin type 1 receptor kinases, phosphorylation declines progressively in a KMT5A-dependent manner. Phosphorylation in this motif is required for interaction with a number of proteins including SMURF2, SNON and SMAD4 in response to TGF-beta. Dephosphorylated in this motif by PPM1A leading to disruption of the SMAD2/3-SMAD4 complex, nuclear export and termination of the TGF-beta signaling. In response to decorin, the naturally occurring inhibitor of TGF-beta signaling, phosphorylated on Ser-240 by CaMK2. Phosphorylated by MAPK3 upon EGF stimulation; which increases transcriptional activity and stability, and is blocked by calmodulin. Phosphorylated by PDPK1. Post-translationally, acetylated on Lys-19 by coactivators in response to TGF-beta signaling, which increases transcriptional activity. In response to TGF-beta, ubiquitinated by NEDD4L; which promotes its degradation. Monoubiquitinated, leading to prevent DNA-binding. Deubiquitination by USP15 alleviates inhibition and promotes activation of TGF-beta target genes. Ubiquitinated by RNF111, leading to its degradation: only SMAD2 proteins that are 'in use' are targeted by RNF111, RNF111 playing a key role in activating SMAD2 and regulating its turnover.

The protein resides in the cytoplasm. Its subcellular location is the nucleus. Its function is as follows. Receptor-regulated SMAD (R-SMAD) that is an intracellular signal transducer and transcriptional modulator activated by TGF-beta (transforming growth factor) and activin type 1 receptor kinases. Binds the TRE element in the promoter region of many genes that are regulated by TGF-beta and, on formation of the SMAD2/SMAD4 complex, activates transcription. Promotes TGFB1-mediated transcription of odontoblastic differentiation genes in dental papilla cells. Positively regulates PDPK1 kinase activity by stimulating its dissociation from the 14-3-3 protein YWHAQ which acts as a negative regulator. This is Mothers against decapentaplegic homolog 2 (SMAD2) from Bos taurus (Bovine).